Reading from the N-terminus, the 166-residue chain is Emerin homolog 1 (166 aa).

The region spanning 1 to 44 (MDVSQLTDAELRDSLKSHGVSVGPIVATTRKLYEKKLIKLSDGS) is the LEM domain. The Nuclear portion of the chain corresponds to 1 to 127 (MDVSQLTDAE…QAQSNKGGFL (127 aa)). Residues 62-99 (IISSSPKKSPPQRVFQNVSAATAAATTSPESDSDDCEE) form a disordered region. Residues 128-148 (GSTITFTILFVFIAVFAYFLI) form a helical membrane-spanning segment. Over 149–166 (ENAEQLKLVAETNPEDTI) the chain is Perinuclear space.

Interacts with lmn-1 and baf-1. Ubiquitous. Expressed in all cells, except in cells undergoing spermatogenesis. High expression in hypodermis, neurons, pharyngeal muscle, body wall muscle and gonadal sheath.

Its subcellular location is the nucleus inner membrane. It is found in the nucleus envelope. In terms of biological role, nuclear lamina-associated inner nuclear membrane protein that is involved in cell division, nuclear structure organization, maintenance of nuclear envelope integrity and nuclear envelope reformation after mitosis. Involved in chromosome segregation and cell division, probably via its interaction with the nuclear intermediate filament protein lmn-1, the main component of nuclear lamina. Required to organize the distribution of lmn-1, nuclear pore complexes (NPCs) and chromatin in mitotically active cells. Together with lem-2, plays a role in baf-1 enrichment at the nuclear envelope in anaphase. Together with lem-2, involved in muscle cell attachment to hypodermal cells, as well as muscle cell location and sarcomere organization. May play a role in radiation-induced DNA damage repair response. May repress binding of transcription factor pha-4 with target sequences in pharyngeal cells. The chain is Emerin homolog 1 (emr-1) from Caenorhabditis elegans.